An 847-amino-acid chain; its full sequence is Zinc transporter ZIP10 (847 aa).

An N-terminal signal peptide occupies residues 1-26; it reads MMRVHTHTRLCFLCVLTLLYHQCSHC. Residues 136–374 form a disordered region; the sequence is GRHSHSAGHP…RREVPGSPAH (239 aa). The segment covering 162 to 171 has biased composition (basic and acidic residues); the sequence is HHENEEHTLA. Positions 179–188 are enriched in polar residues; it reads TLGTGATPPS. A compositionally biased stretch (basic and acidic residues) spans 190-269; it reads SEEHDHDHEH…QEHNDLSDQN (80 aa). Composition is skewed to basic residues over residues 270-285 and 314-330; these read HHHHDHHHHKHPHPHL and TRRHRRPSKVKAHRGRN. An N-linked (GlcNAc...) asparagine glycan is attached at Asn385. 3 helical membrane passes run 447–467, 474–494, and 529–549; these read FVSITIISLLSLLGVVLVPIL, FLLTFLVALAVGTLSGDALLH, and GLTALAGIYLLFIIEHCIGMF. Residues 613 to 676 are disordered; sequence ELQPLDSPSK…HSHHGHCHSD (64 aa). Positions 629 to 646 are enriched in basic and acidic residues; it reads DSDHPYEAPVKTEEDNVP. Residues 648-672 are compositionally biased toward basic residues; the sequence is AKSKKHGHGHGHGHGHGHGHSHHGH. Helical transmembrane passes span 705–725, 750–770, 779–799, and 817–837; these read AIGAAFSANITGGISTSVAVF, IVYNLLSALMAYAGMVIGTAV, SWIFAVTAGMFLYVALVDMLP, and FVLQNFGMLTGFGIMLLIAIF.

It belongs to the ZIP transporter (TC 2.A.5) family. Post-translationally, undergoes N-terminal ectodomain shedding.

Its subcellular location is the cell membrane. It is found in the apical cell membrane. The enzyme catalyses Zn(2+)(in) = Zn(2+)(out). Zinc-influx transporter. When associated with slc39a6, the heterodimer slc39a10/slc39a6 has a functional role in epithelial-mesenchymal transition (EMT) during embryonic development. Slc39a10/slc39a6 heterodimers play also an essentiel role in initiating mitosis by importing zinc into cells to initiate a pathway resulting in the onset of mitosis. When associated with slc39a6, the heterodimer controls Ncam1 phosphorylation and integration into focal adhesion complexes during EMT. The protein is Zinc transporter ZIP10 of Danio rerio (Zebrafish).